The sequence spans 319 residues: D-ribose/D-allose-binding protein (319 aa).

Residues 1-29 (MKRVASRRLLAAVVLTACSSFLPLSAVHA) form the signal peptide.

Belongs to the bacterial solute-binding protein 2 family.

The protein localises to the periplasm. In terms of biological role, binds specifically both D-ribose and D-allose, with affinities in the lower micromolar range. In Pseudomonas aeruginosa (strain ATCC 15692 / DSM 22644 / CIP 104116 / JCM 14847 / LMG 12228 / 1C / PRS 101 / PAO1), this protein is D-ribose/D-allose-binding protein.